The chain runs to 465 residues: Ribulose bisphosphate carboxylase large chain (465 aa).

At Lys-4 the chain carries N6,N6,N6-trimethyllysine. Positions 113 and 163 each coordinate substrate. Lys-165 functions as the Proton acceptor in the catalytic mechanism. Substrate is bound at residue Lys-167. Positions 191, 193, and 194 each coordinate Mg(2+). An N6-carboxylysine modification is found at Lys-191. His-284 serves as the catalytic Proton acceptor. Residues Arg-285, His-317, and Ser-369 each coordinate substrate.

It belongs to the RuBisCO large chain family. Type I subfamily. As to quaternary structure, heterohexadecamer of 8 large chains and 8 small chains; disulfide-linked. The disulfide link is formed within the large subunit homodimers. Requires Mg(2+) as cofactor. The disulfide bond which can form in the large chain dimeric partners within the hexadecamer appears to be associated with oxidative stress and protein turnover.

It localises to the plastid. Its subcellular location is the chloroplast. It catalyses the reaction 2 (2R)-3-phosphoglycerate + 2 H(+) = D-ribulose 1,5-bisphosphate + CO2 + H2O. The catalysed reaction is D-ribulose 1,5-bisphosphate + O2 = 2-phosphoglycolate + (2R)-3-phosphoglycerate + 2 H(+). In terms of biological role, ruBisCO catalyzes two reactions: the carboxylation of D-ribulose 1,5-bisphosphate, the primary event in carbon dioxide fixation, as well as the oxidative fragmentation of the pentose substrate in the photorespiration process. Both reactions occur simultaneously and in competition at the same active site. The sequence is that of Ribulose bisphosphate carboxylase large chain from Morella cerifera (Wax myrtle).